An 89-amino-acid polypeptide reads, in one-letter code: Small ribosomal subunit protein uS15 (89 aa).

The protein belongs to the universal ribosomal protein uS15 family. As to quaternary structure, part of the 30S ribosomal subunit. Forms a bridge to the 50S subunit in the 70S ribosome, contacting the 23S rRNA.

Its function is as follows. One of the primary rRNA binding proteins, it binds directly to 16S rRNA where it helps nucleate assembly of the platform of the 30S subunit by binding and bridging several RNA helices of the 16S rRNA. Functionally, forms an intersubunit bridge (bridge B4) with the 23S rRNA of the 50S subunit in the ribosome. The sequence is that of Small ribosomal subunit protein uS15 from Crocosphaera subtropica (strain ATCC 51142 / BH68) (Cyanothece sp. (strain ATCC 51142)).